Reading from the N-terminus, the 327-residue chain is Phenylalanine--tRNA ligase alpha subunit (327 aa).

Position 252 (glutamate 252) interacts with Mg(2+).

The protein belongs to the class-II aminoacyl-tRNA synthetase family. Phe-tRNA synthetase alpha subunit type 1 subfamily. Tetramer of two alpha and two beta subunits. It depends on Mg(2+) as a cofactor.

It localises to the cytoplasm. It carries out the reaction tRNA(Phe) + L-phenylalanine + ATP = L-phenylalanyl-tRNA(Phe) + AMP + diphosphate + H(+). This is Phenylalanine--tRNA ligase alpha subunit from Photorhabdus laumondii subsp. laumondii (strain DSM 15139 / CIP 105565 / TT01) (Photorhabdus luminescens subsp. laumondii).